Reading from the N-terminus, the 278-residue chain is Large ribosomal subunit protein uL2 (278 aa).

Disordered regions lie at residues 1-58 (MAIR…GGGH) and 225-278 (VMNP…KNKR). Positions 37-58 (LHGRGGRNAHGRITTRHKGGGH) are enriched in basic residues. Basic and acidic residues predominate over residues 253–267 (PEGRTRKNKASDKMI). Basic residues predominate over residues 268–278 (VRRRRTGKNKR).

Belongs to the universal ribosomal protein uL2 family. As to quaternary structure, part of the 50S ribosomal subunit. Forms a bridge to the 30S subunit in the 70S ribosome.

One of the primary rRNA binding proteins. Required for association of the 30S and 50S subunits to form the 70S ribosome, for tRNA binding and peptide bond formation. It has been suggested to have peptidyltransferase activity; this is somewhat controversial. Makes several contacts with the 16S rRNA in the 70S ribosome. The chain is Large ribosomal subunit protein uL2 from Rhodococcus erythropolis (strain PR4 / NBRC 100887).